A 125-amino-acid chain; its full sequence is Large ribosomal subunit protein bL12 (125 aa).

The protein belongs to the bacterial ribosomal protein bL12 family. Homodimer. Part of the ribosomal stalk of the 50S ribosomal subunit. Forms a multimeric L10(L12)X complex, where L10 forms an elongated spine to which 2 to 4 L12 dimers bind in a sequential fashion. Binds GTP-bound translation factors.

Its function is as follows. Forms part of the ribosomal stalk which helps the ribosome interact with GTP-bound translation factors. Is thus essential for accurate translation. The chain is Large ribosomal subunit protein bL12 from Rickettsia conorii (strain ATCC VR-613 / Malish 7).